The following is an 804-amino-acid chain: Ribonucleoside-diphosphate reductase large subunit-like protein (804 aa).

Belongs to the ribonucleoside diphosphate reductase large chain family.

It localises to the virion. Its subcellular location is the host cytoplasm. Functionally, does not possess a ribonucleotide reductase activity. Betaherpesviruses probably use another strategy to expand the dNTP pool in a quiescent host cell. In Homo sapiens (Human), this protein is Ribonucleoside-diphosphate reductase large subunit-like protein.